Here is a 318-residue protein sequence, read N- to C-terminus: Acetyl-coenzyme A carboxylase carboxyl transferase subunit alpha (318 aa).

The region spanning 36 to 293 (EIDRLKEKST…KTRLSEQLDQ (258 aa)) is the CoA carboxyltransferase C-terminal domain.

Belongs to the AccA family. As to quaternary structure, acetyl-CoA carboxylase is a heterohexamer composed of biotin carboxyl carrier protein (AccB), biotin carboxylase (AccC) and two subunits each of ACCase subunit alpha (AccA) and ACCase subunit beta (AccD).

The protein localises to the cytoplasm. The enzyme catalyses N(6)-carboxybiotinyl-L-lysyl-[protein] + acetyl-CoA = N(6)-biotinyl-L-lysyl-[protein] + malonyl-CoA. The protein operates within lipid metabolism; malonyl-CoA biosynthesis; malonyl-CoA from acetyl-CoA: step 1/1. Component of the acetyl coenzyme A carboxylase (ACC) complex. First, biotin carboxylase catalyzes the carboxylation of biotin on its carrier protein (BCCP) and then the CO(2) group is transferred by the carboxyltransferase to acetyl-CoA to form malonyl-CoA. The chain is Acetyl-coenzyme A carboxylase carboxyl transferase subunit alpha from Teredinibacter turnerae (strain ATCC 39867 / T7901).